Consider the following 1264-residue polypeptide: Valine--tRNA ligase (1264 aa).

The residue at position 2 (Ser-2) is an N-acetylserine. In terms of domain architecture, GST C-terminal spans 89–219; that stretch reads GSRAAVLVQQ…YSGARPLSHQ (131 aa). Residues 217–296 form a disordered region; that stretch reads SHQPGPEAPA…GEKKDVSGPM (80 aa). Basic and acidic residues-rich tracts occupy residues 234–248 and 261–275; these read LKKEAKKREKLEKFQ and GEKKPKPEKREKRDP. The short motif at 344-354 is the 'HIGH' region element; the sequence is PNVTGSLHLGH. Ser-437 and Ser-527 each carry phosphoserine. Lys-645 carries the post-translational modification N6-acetyllysine. Residues 862 to 866 carry the 'KMSKS' region motif; that stretch reads KMSKS. Lys-865 provides a ligand contact to ATP.

It belongs to the class-I aminoacyl-tRNA synthetase family. As to quaternary structure, forms high-molecular-mass aggregates with elongation factor 1.

It carries out the reaction tRNA(Val) + L-valine + ATP = L-valyl-tRNA(Val) + AMP + diphosphate. With respect to regulation, can be regulated by protein kinase C-dependent phosphorylation. Functionally, catalyzes the attachment of valine to tRNA(Val). The sequence is that of Valine--tRNA ligase from Homo sapiens (Human).